A 193-amino-acid polypeptide reads, in one-letter code: Urease accessory protein UreE (193 aa).

The segment at 138–193 (RGAYHSHGAHSHDQGHAAHDHGNEHKHDHGHDHVHGPGCDHDHDHDHGHHHDHKHD) is disordered. A compositionally biased stretch (basic and acidic residues) spans 147-193 (HSHDQGHAAHDHGNEHKHDHGHDHVHGPGCDHDHDHDHGHHHDHKHD).

This sequence belongs to the UreE family.

Its subcellular location is the cytoplasm. In terms of biological role, involved in urease metallocenter assembly. Binds nickel. Probably functions as a nickel donor during metallocenter assembly. The chain is Urease accessory protein UreE from Rhizobium leguminosarum bv. trifolii (strain WSM2304).